Consider the following 496-residue polypeptide: Maturase K (496 aa).

The protein belongs to the intron maturase 2 family. MatK subfamily.

It localises to the plastid. The protein localises to the chloroplast. In terms of biological role, usually encoded in the trnK tRNA gene intron. Probably assists in splicing its own and other chloroplast group II introns. This Paeonia suffruticosa (Tree peony) protein is Maturase K.